The following is a 106-amino-acid chain: Venom family 8-like peptide Pr8a (106 aa).

The signal sequence occupies residues 1-17; it reads MSPIAFLLPFLLQMVLS.

In terms of processing, contains 2 disulfide bonds. In terms of tissue distribution, expressed by the venom gland (anterior main gland) (at protein level).

It localises to the secreted. This Platymeris rhadamanthus (Red spot assassin bug) protein is Venom family 8-like peptide Pr8a.